The primary structure comprises 469 residues: UDP-N-acetylmuramate--L-alanine ligase (469 aa).

An ATP-binding site is contributed by 113–119 (GAHGKTT).

Belongs to the MurCDEF family.

It is found in the cytoplasm. It catalyses the reaction UDP-N-acetyl-alpha-D-muramate + L-alanine + ATP = UDP-N-acetyl-alpha-D-muramoyl-L-alanine + ADP + phosphate + H(+). The protein operates within cell wall biogenesis; peptidoglycan biosynthesis. Functionally, cell wall formation. The polypeptide is UDP-N-acetylmuramate--L-alanine ligase (Syntrophobacter fumaroxidans (strain DSM 10017 / MPOB)).